The primary structure comprises 757 residues: Lysyl oxidase homolog 4 (757 aa).

An N-terminal signal peptide occupies residues 1–25; that stretch reads MMWPQPPTFSLFLLLLLSQAPSSRP. SRCR domains follow at residues 33 to 134, 160 to 288, 312 to 412, and 422 to 530; these read LRLV…VVCH, VRLK…VSCV, VRLR…VRCN, and VRLA…VACM. 17 cysteine pairs are disulfide-bonded: C59–C123, C72–C133, C103–C113, C192–C277, C205–C287, C252–C262, C337–C401, C350–C411, C381–C391, C451–C516, C464–C529, C498–C508, C559–C565, C611–C659, C643–C649, C671–C681, and C718–C732. N-linked (GlcNAc...) asparagine glycosylation occurs at N199. The tract at residues 534-737 is lysyl-oxidase like; the sequence is PDLVMNAQLV…WLHNCHTGDS (204 aa). Residues H612, H614, and H616 each coordinate Cu cation. Residue N630 is glycosylated (N-linked (GlcNAc...) asparagine). The segment at residues 639–675 is a cross-link (lysine tyrosylquinone (Lys-Tyr)); that stretch reads KASFCLEDTNCPSGVQRRYACANFGEQGVAVGCWDTY. The residue at position 675 (Y675) is a 2',4',5'-topaquinone.

The protein belongs to the lysyl oxidase family. Cu cation serves as cofactor. Lysine tyrosylquinone residue is required as a cofactor. The lysine tyrosylquinone cross-link (LTQ) is generated by condensation of the epsilon-amino group of a lysine with a topaquinone produced by oxidation of tyrosine. Post-translationally, may be proteolytically cleaved by BMP1.

It localises to the secreted. It is found in the extracellular space. The enzyme catalyses L-lysyl-[protein] + O2 + H2O = (S)-2-amino-6-oxohexanoyl-[protein] + H2O2 + NH4(+). Functionally, catalyzes the oxidative deamination of lysine and hydroxylysine residues in collagen and elastin, resulting in the formation of covalent cross-linkages, and the stabilization of collagen and elastin fibers. The polypeptide is Lysyl oxidase homolog 4 (Loxl4) (Mus musculus (Mouse)).